Reading from the N-terminus, the 162-residue chain is Thy-1 membrane glycoprotein (162 aa).

The N-terminal stretch at 1-19 (MNPAISVALLLSVLQVSRG) is a signal peptide. A Pyrrolidone carboxylic acid modification is found at glutamine 20. The Ig-like V-type domain occupies 20–127 (QKVTSLTACL…NKSISVYRDK (108 aa)). 2 disulfides stabilise this stretch: cysteine 28-cysteine 131 and cysteine 38-cysteine 105. 3 N-linked (GlcNAc...) asparagine glycosylation sites follow: asparagine 42, asparagine 94, and asparagine 118. The GPI-anchor amidated cysteine; alternate moiety is linked to residue cysteine 131. A propeptide spans 132 to 162 (GGISLLVQNTSWMLLLLLSLSLLQALDFISL) (removed in mature form).

It localises to the cell membrane. Its function is as follows. May play a role in cell-cell or cell-ligand interactions during synaptogenesis and other events in the brain. This chain is Thy-1 membrane glycoprotein (Thy1), found in Mus musculus (Mouse).